Consider the following 332-residue polypeptide: Ferredoxin--NADP reductase (332 aa).

7 residues coordinate FAD: D33, Q41, Y46, A86, F120, D286, and T327.

This sequence belongs to the ferredoxin--NADP reductase type 2 family. In terms of assembly, homodimer. It depends on FAD as a cofactor.

It catalyses the reaction 2 reduced [2Fe-2S]-[ferredoxin] + NADP(+) + H(+) = 2 oxidized [2Fe-2S]-[ferredoxin] + NADPH. The sequence is that of Ferredoxin--NADP reductase from Rickettsia bellii (strain OSU 85-389).